A 334-amino-acid chain; its full sequence is MTSPSPAFGVLLVNLGTPDEPTPKAVKRFLKQFLSDPRVVDLSPWLWQPILQGIILNTRPKKVAKLYQSVWTEQGSPLMVISQCQAQKLATDLSATFNQTIPVELGMSYGNPSIESGFAKLKAQGAERIVVLPLYPQYSCSTVASVFDAVAHYLTRVRDIPELRFNKQYFAHEAYIAALAHSVKRHWKTHGQAEKLILSFHGIPLRYATEGDPYPEQCRTTAKLLAQALGLTDGQWQVCFQSRFGKEEWLTPYADELLADLPRQGVKSVDVICPAFATDCLETLEEISIGAKETFLHAGGEAYHFIPCLNDDELHIELLRLLVQEQTQSWISAE.

The Fe cation site is built by His201 and Glu282.

The protein belongs to the ferrochelatase family.

The protein resides in the cytoplasm. The catalysed reaction is heme b + 2 H(+) = protoporphyrin IX + Fe(2+). The protein operates within porphyrin-containing compound metabolism; protoheme biosynthesis; protoheme from protoporphyrin-IX: step 1/1. Functionally, catalyzes the ferrous insertion into protoporphyrin IX. In Shewanella oneidensis (strain ATCC 700550 / JCM 31522 / CIP 106686 / LMG 19005 / NCIMB 14063 / MR-1), this protein is Ferrochelatase 1.